The following is a 434-amino-acid chain: MSLSGQLWKMVNSTSPNAAATVGNIAYCYVLPCICAIGIVGNITNLMVLASRRLRAVSYMYLRALAVADLLCMLFVLVFVSTEYLAKNGSSINQYKLYQIYQCHLMLTLINWALGAGVYVVVALSLERYISIVFPMHFRTWNSPQRATRAIVIAFLIPAIFYVPYAITRYKGKQRFDLLQNVTIYSMDDHPIYTTFYWQIYKWTREAILRFLPIIILTVLNIQIMIAFRKRQKMFQQLTNKRKEQGTQKDDTLMYMLGGTVLMSLVCNIPAAINLLLIDETLKKRLDYQIFRAVANILEITNHASQFYVFCACSTDYRTTFLQKFPCFKTDYANRDRLRSFVRRTQSVIQKQGSVEHTTNSKVWIMFKNKFQRDSLSHHSRKFSRHMPIEQDTVDIQLASGEQSTSGEMCEADTLIKYGGTAQLCNDENNTTFL.

N-linked (GlcNAc...) asparagine glycosylation occurs at N12. 2 helical membrane passes run 30–50 (VLPC…MVLA) and 65–85 (LAVA…TEYL). Residue N88 is glycosylated (N-linked (GlcNAc...) asparagine). A run of 2 helical transmembrane segments spans residues 105–125 (LMLT…VALS) and 147–167 (ATRA…PYAI). N-linked (GlcNAc...) asparagine glycosylation is present at N181. 2 consecutive transmembrane segments (helical) span residues 208–228 (ILRF…MIAF) and 258–278 (GGTV…LLLI). Residues N429 and N430 are each glycosylated (N-linked (GlcNAc...) asparagine).

The protein belongs to the G-protein coupled receptor 1 family.

It is found in the cell membrane. Not known. Putative receptor. The polypeptide is Probable G-protein coupled receptor B0563.6 (Caenorhabditis elegans).